Here is an 856-residue protein sequence, read N- to C-terminus: Translation initiation factor IF-2 (856 aa).

Disordered regions lie at residues 1-248 and 254-273; these read MSDN…ARAR and KRAR…QQKQ. A compositionally biased stretch (polar residues) spans 22–38; it reads ETGQVKQSFSHGRSNTV. A compositionally biased stretch (pro residues) spans 83-93; sequence APRPAPAPIPT. The span at 100 to 150 shows a compositional bias: basic and acidic residues; it reads LERREQQERLLREAEEARMAALEETRRREERAKAEATEEERRRAEENRRAE. The span at 156–196 shows a compositional bias: low complexity; the sequence is AAAAAAAAATAEAETAAAAPREEAPAAAGTAEEAPRTSSST. Residues 197-209 show a composition bias toward pro residues; sequence MPPPRRFTPVPSP. Residues 210-229 are compositionally biased toward basic and acidic residues; sequence KRPEPPRPQQRDRKGDDRRQ. The region spanning 356–526 is the tr-type G domain; the sequence is PRPPVVTIMG…ELQAELLELK (171 aa). A G1 region spans residues 365 to 372; the sequence is GHVDHGKT. Residue 365–372 coordinates GTP; it reads GHVDHGKT. The tract at residues 390–394 is G2; it reads GITQH. A G3 region spans residues 412–415; the sequence is DTPG. GTP is bound by residues 412 to 416 and 466 to 469; these read DTPGH and NKMD. A G4 region spans residues 466-469; sequence NKMD. The segment at 502–504 is G5; sequence SAL.

This sequence belongs to the TRAFAC class translation factor GTPase superfamily. Classic translation factor GTPase family. IF-2 subfamily.

It is found in the cytoplasm. In terms of biological role, one of the essential components for the initiation of protein synthesis. Protects formylmethionyl-tRNA from spontaneous hydrolysis and promotes its binding to the 30S ribosomal subunits. Also involved in the hydrolysis of GTP during the formation of the 70S ribosomal complex. The sequence is that of Translation initiation factor IF-2 from Rhizorhabdus wittichii (strain DSM 6014 / CCUG 31198 / JCM 15750 / NBRC 105917 / EY 4224 / RW1) (Sphingomonas wittichii).